We begin with the raw amino-acid sequence, 457 residues long: Glycine receptor subunit alpha-1 (457 aa).

A signal peptide spans 1-28; the sequence is MYSFNTLRLYLWETIVFFSLAASKEAEA. Residues 29–250 lie on the Extracellular side of the membrane; it reads ARSAPKPMSP…RFHLERQMGY (222 aa). Asn-66 carries an N-linked (GlcNAc...) asparagine glycan. Residues Arg-93 and Ser-157 each coordinate glycine. Cys-166 and Cys-180 are disulfide-bonded. The Zn(2+) site is built by Glu-220 and Asp-222. Cys-226 and Cys-237 are disulfide-bonded. 230–235 serves as a coordination point for strychnine; that stretch reads YNTGKF. Thr-232 is a glycine binding site. His-243 contributes to the Zn(2+) binding site. The helical transmembrane segment at 251-272 threads the bilayer; it reads YLIQMYIPSLLIVILSWISFWI. The Cytoplasmic portion of the chain corresponds to 273-277; the sequence is NMDAA. The helical transmembrane segment at 278 to 298 threads the bilayer; it reads PARVGLGITTVLTMTTQSSGS. Residues 299 to 309 are Extracellular-facing; the sequence is RASLPKVSYVK. Residues 310–330 traverse the membrane as a helical segment; sequence AIDIWMAVCLLFVFSALLEYA. Residues 331–425 lie on the Cytoplasmic side of the membrane; the sequence is AVNFVSRQHK…FIQRAKKIDK (95 aa). The interval 391 to 410 is disordered; the sequence is KGANNSNTTNPPPAPSKSPE. Residues 426 to 446 form a helical membrane-spanning segment; the sequence is ISRIGFPMAFLIFNMFYWIIY. Residues 447–457 are Extracellular-facing; sequence KIVRREDVHNQ.

Belongs to the ligand-gated ion channel (TC 1.A.9) family. Glycine receptor (TC 1.A.9.3) subfamily. GLRA1 sub-subfamily. Interacts with GLRB to form heteropentameric channels; this is probably the predominant form in vivo. Heteropentamer composed of four GLRA1 subunits and one GLRB subunit. Heteropentamer composed of two GLRA1 and three GLRB. Heteropentamer composed of three GLRA1 and two GLRB. Homopentamer (in vitro). Both homopentamers and heteropentamers form functional ion channels, but their characteristics are subtly different.

It is found in the postsynaptic cell membrane. Its subcellular location is the synapse. It localises to the perikaryon. The protein localises to the cell projection. The protein resides in the dendrite. It is found in the cell membrane. It catalyses the reaction chloride(in) = chloride(out). Its activity is regulated as follows. Channel opening is triggered by extracellular glycine. Channel characteristics depend on the subunit composition; heteropentameric channels are activated by lower glycine levels and display faster desensitization. Channel opening is also triggered by taurine and beta-alanine. Channel activity is potentiated by nanomolar concentrations of Zn(2+); half-maximal activation is observed with 37 nM Zn(2+). Inhibited by higher Zn(2+) levels; haf-maximal inhibition occurs at 20 uM Zn(2+). Inhibited by strychnine. Strychnine binding locks the channel in a closed conformation and prevents channel opening in response to extracellular glycine. Inhibited by lindane. Inhibited by picrotoxin. Subunit of heteromeric glycine-gated chloride channels. Plays an important role in the down-regulation of neuronal excitability. Contributes to the generation of inhibitory postsynaptic currents. Channel activity is potentiated by ethanol. Potentiation of channel activity by intoxicating levels of ethanol contribute to the sedative effects of ethanol. This chain is Glycine receptor subunit alpha-1 (GLRA1), found in Homo sapiens (Human).